We begin with the raw amino-acid sequence, 274 residues long: Thiamine kinase (274 aa).

This sequence belongs to the thiamine kinase family.

It carries out the reaction thiamine + ATP = thiamine phosphate + ADP + H(+). Its pathway is cofactor biosynthesis; thiamine diphosphate biosynthesis; thiamine phosphate from thiamine: step 1/1. Functionally, catalyzes the ATP-dependent phosphorylation of thiamine to thiamine phosphate. Is involved in thiamine salvage. This Shigella dysenteriae serotype 1 (strain Sd197) protein is Thiamine kinase.